The following is a 299-amino-acid chain: Tricarboxylate transport protein (299 aa).

Solcar repeat units follow at residues 10-97 (VDPL…IKDM), 109-199 (TRGV…IKTL), and 212-297 (LSSG…VLVM). Helical transmembrane passes span 16–36 (FLAG…FEFA), 66–86 (IGSI…KAGI), 113–133 (IAGL…FEAI), 174–193 (GVLP…LGCY), 215–235 (GLTF…TMPL), and 272–291 (GATP…FTIY).

This sequence belongs to the mitochondrial carrier (TC 2.A.29) family.

The protein localises to the mitochondrion inner membrane. In terms of biological role, transport of citrate across inner mitochondrial membrane. This is Tricarboxylate transport protein (CTP1) from Saccharomyces cerevisiae (strain ATCC 204508 / S288c) (Baker's yeast).